We begin with the raw amino-acid sequence, 425 residues long: UDP-N-acetylglucosamine 1-carboxyvinyltransferase (425 aa).

23 to 24 contacts phosphoenolpyruvate; that stretch reads KN. Arginine 100 provides a ligand contact to UDP-N-acetyl-alpha-D-glucosamine. Cysteine 124 (proton donor) is an active-site residue. 2-(S-cysteinyl)pyruvic acid O-phosphothioketal is present on cysteine 124. 2 residues coordinate UDP-N-acetyl-alpha-D-glucosamine: aspartate 313 and isoleucine 335.

It belongs to the EPSP synthase family. MurA subfamily.

It is found in the cytoplasm. It carries out the reaction phosphoenolpyruvate + UDP-N-acetyl-alpha-D-glucosamine = UDP-N-acetyl-3-O-(1-carboxyvinyl)-alpha-D-glucosamine + phosphate. It functions in the pathway cell wall biogenesis; peptidoglycan biosynthesis. In terms of biological role, cell wall formation. Adds enolpyruvyl to UDP-N-acetylglucosamine. The protein is UDP-N-acetylglucosamine 1-carboxyvinyltransferase of Wolbachia pipientis wMel.